Consider the following 350-residue polypeptide: Blue-sensitive opsin (350 aa).

At 1 to 36 the chain is on the extracellular side; sequence MNGTEGPNFYVPMSNATGVVRSPFEYPQYYLAEPWA. 2 N-linked (GlcNAc...) asparagine glycosylation sites follow: Asn2 and Asn15. The chain crosses the membrane as a helical span at residues 37-61; it reads FSILAAYMFFLIITGFPINFLTLYV. Topologically, residues 62 to 73 are cytoplasmic; the sequence is TIEHKKLRTPLN. Residues 74–98 form a helical membrane-spanning segment; that stretch reads YILLNLAVADLFMVFGGFTTTMYTS. Over 99 to 113 the chain is Extracellular; sequence MHGYFVFGETGCNLE. An intrachain disulfide couples Cys110 to Cys187. A helical transmembrane segment spans residues 114 to 133; the sequence is GYFATLGGEISLWSLVVLAI. The Cytoplasmic portion of the chain corresponds to 134–152; sequence ERWVVVCKPISNFRFGENH. The chain crosses the membrane as a helical span at residues 153–176; sequence AIMGLTLTWVMANACAMPPLFGWS. Residues 177-202 are Extracellular-facing; it reads RYIPEGLQCSCGIDYYTLKPEVNNES. Asn200 carries an N-linked (GlcNAc...) asparagine glycan. Residues 203 to 230 form a helical membrane-spanning segment; it reads FVIYMFLVHFTIPLTIISFCYGRLVCAV. At 231–252 the chain is on the cytoplasmic side; the sequence is KEAAAQQQESETTQRAEREVTR. Residues 253-276 form a helical membrane-spanning segment; it reads MVVIMVISFLVCWIPYASVAWYIF. Over 277–284 the chain is Extracellular; sequence THQGSTFG. The chain crosses the membrane as a helical span at residues 285 to 309; sequence PIFMTVPSFFAKSSSIYNPMIYICM. At Lys296 the chain carries N6-(retinylidene)lysine. Over 310–350 the chain is Cytoplasmic; that stretch reads NKQFRNCMITTLFCGKNPFEGEEEGSTTKTEASAVSSVSPA. Positions 330-350 are disordered; that stretch reads GEEEGSTTKTEASAVSSVSPA.

This sequence belongs to the G-protein coupled receptor 1 family. Opsin subfamily. In terms of processing, phosphorylated on some or all of the serine and threonine residues present in the C-terminal region. As to expression, rod shaped photoreceptor cells which mediates vision in dim light.

The protein resides in the membrane. Its function is as follows. Visual pigments are the light-absorbing molecules that mediate vision. They consist of an apoprotein, opsin, covalently linked to cis-retinal. The polypeptide is Blue-sensitive opsin (Conger conger (Conger eel)).